The sequence spans 229 residues: Ras-related protein RabZ (229 aa).

The tract at residues 1–39 (MGCFHSREPTATGKTKKEEPTSAVKTNKEEKSSNYVSEP) is disordered. Gly-2 carries the N-myristoyl glycine lipid modification. Cys-3 carries the S-palmitoyl cysteine lipid modification. The span at 15 to 32 (TKKEEPTSAVKTNKEEKS) shows a compositional bias: basic and acidic residues. 57-64 (GDQATGKS) lines the GTP pocket. The Effector region motif lies at 79-88 (HKPSPIIIDC). GTP-binding positions include 106-110 (DTAGQ) and 164-167 (NKCD).

This sequence belongs to the small GTPase superfamily. Rab family. Post-translationally, although this sequence lacks the C-terminal cysteine motifs subject to isoprenylation in other Rab proteins, it does have N-terminal myristoylation and S-palmitoylation sequence motifs.

In Dictyostelium discoideum (Social amoeba), this protein is Ras-related protein RabZ (rabZ).